A 498-amino-acid chain; its full sequence is Aspartyl/glutamyl-tRNA(Asn/Gln) amidotransferase subunit B (498 aa).

This sequence belongs to the GatB/GatE family. GatB subfamily. As to quaternary structure, heterotrimer of A, B and C subunits.

The enzyme catalyses L-glutamyl-tRNA(Gln) + L-glutamine + ATP + H2O = L-glutaminyl-tRNA(Gln) + L-glutamate + ADP + phosphate + H(+). It catalyses the reaction L-aspartyl-tRNA(Asn) + L-glutamine + ATP + H2O = L-asparaginyl-tRNA(Asn) + L-glutamate + ADP + phosphate + 2 H(+). In terms of biological role, allows the formation of correctly charged Asn-tRNA(Asn) or Gln-tRNA(Gln) through the transamidation of misacylated Asp-tRNA(Asn) or Glu-tRNA(Gln) in organisms which lack either or both of asparaginyl-tRNA or glutaminyl-tRNA synthetases. The reaction takes place in the presence of glutamine and ATP through an activated phospho-Asp-tRNA(Asn) or phospho-Glu-tRNA(Gln). This Caulobacter vibrioides (strain ATCC 19089 / CIP 103742 / CB 15) (Caulobacter crescentus) protein is Aspartyl/glutamyl-tRNA(Asn/Gln) amidotransferase subunit B.